We begin with the raw amino-acid sequence, 298 residues long: Inosose dehydratase (298 aa).

The protein belongs to the IolE/MocC family. The cofactor is glutathione. Co(2+) is required as a cofactor. Mn(2+) serves as cofactor.

It catalyses the reaction scyllo-inosose = 3D-3,5/4-trihydroxycyclohexane-1,2-dione + H2O. Catalyzes the dehydration of inosose (2-keto-myo-inositol, 2KMI or 2,4,6/3,5-pentahydroxycyclohexanone) to 3D-(3,5/4)-trihydroxycyclohexane-1,2-dione (D-2,3-diketo-4-deoxy-epi-inositol). This is Inosose dehydratase from Yersinia enterocolitica serotype O:8 / biotype 1B (strain NCTC 13174 / 8081).